A 382-amino-acid polypeptide reads, in one-letter code: Putative phospholipase A1 (382 aa).

Residues M1 to A27 form the signal peptide. Residues F28–Q65 lie on the Periplasmic side of the membrane. A beta stranded transmembrane segment spans residues E66–R78. At S79 to R168 the chain is on the extracellular side. The beta stranded transmembrane segment at A169–E183 threads the bilayer. Over D184–R189 the chain is Periplasmic. A beta stranded transmembrane segment spans residues A190 to W202. Residues Q203–P213 are Extracellular-facing. S211 contributes to the Ca(2+) binding site. The beta stranded transmembrane segment at F214–L233 threads the bilayer. The Periplasmic segment spans residues P234–G236. The chain crosses the membrane as a beta stranded span at residues G237–S250. H248 acts as the Proton acceptor in catalysis. S250 (nucleophile) is an active-site residue. The Extracellular portion of the chain corresponds to N251 to R259. S258 is a binding site for Ca(2+). A beta stranded membrane pass occupies residues S260–W272. The Periplasmic segment spans residues G273 to K274. A beta stranded transmembrane segment spans residues L275–R284. The Extracellular portion of the chain corresponds to A285–D306. D294 serves as a coordination point for Ca(2+). A beta stranded transmembrane segment spans residues V307 to L313. Topologically, residues N314–D315 are periplasmic. Residues R316–Y325 traverse the membrane as a beta stranded segment. The Extracellular portion of the chain corresponds to N326 to G332. The beta stranded transmembrane segment at A333–P341 threads the bilayer. The Periplasmic segment spans residues I342 to L346. Residues K347–Y356 form a beta stranded membrane-spanning segment. At G357–H365 the chain is on the extracellular side. A beta stranded membrane pass occupies residues K366–N377. Residues D378–I382 lie on the Periplasmic side of the membrane.

Belongs to the phospholipase A1 family. Homodimer; dimerization is reversible, and the dimeric form is the active one. Ca(2+) is required as a cofactor.

The protein resides in the cell outer membrane. It carries out the reaction a 1,2-diacyl-sn-glycero-3-phosphocholine + H2O = a 2-acyl-sn-glycero-3-phosphocholine + a fatty acid + H(+). The enzyme catalyses a 1,2-diacyl-sn-glycero-3-phosphocholine + H2O = a 1-acyl-sn-glycero-3-phosphocholine + a fatty acid + H(+). Its function is as follows. Hydrolysis of phosphatidylcholine with phospholipase A2 (EC 3.1.1.4) and phospholipase A1 (EC 3.1.1.32) activities. The sequence is that of Putative phospholipase A1 from Neisseria meningitidis serogroup B (strain ATCC BAA-335 / MC58).